The following is a 294-amino-acid chain: sn-glycerol-3-phosphate transport system permease protein UgpA (294 aa).

The Cytoplasmic segment spans residues 1-11 (MSPSRPGFSCS). The chain crosses the membrane as a helical span at residues 12–32 (WLPYLLVLPQLAITAIFFLWP). Residues 33-80 (AGEALWYSVQTLDPFGLSSEFVGLSNFIQLFQDEYYLASFYTTLIFSA) lie on the Periplasmic side of the membrane. Positions 72–284 (FYTTLIFSAL…LLVIGLTVIQ (213 aa)) constitute an ABC transmembrane type-1 domain. The chain crosses the membrane as a helical span at residues 81-101 (LVAGIGLNVSLFLAAMVDYVL). Topologically, residues 102–109 (RGSRLYQT) are cytoplasmic. The chain crosses the membrane as a helical span at residues 110-130 (LLILPYAVAPAVAAVLWIFLF). Residues 131–157 (DPGLGLITHALAKLGYSWNHAQNSGQA) are Periplasmic-facing. Residues 158–178 (MFLVVLASVWKQISYNFLFFL) form a helical membrane-spanning segment. The Cytoplasmic segment spans residues 179-207 (AALQSIPKSLVEAAAIDGAGPVRRFFNLV). The chain crosses the membrane as a helical span at residues 208 to 228 (LPLISPVSFFLLVVNLVYAFF). Topologically, residues 229–262 (DTFPVIDAATGGGPVQATTTLIYKIYREGFAGLD) are periplasmic. Residues 263–283 (LSSSAAQSVILMLLVIGLTVI) traverse the membrane as a helical segment. The Cytoplasmic segment spans residues 284-294 (QFRFVERKVRY).

The protein belongs to the binding-protein-dependent transport system permease family. UgpAE subfamily. As to quaternary structure, the complex is composed of two ATP-binding proteins (UgpC), two transmembrane proteins (UgpA and UgpE) and a solute-binding protein (UgpB).

It localises to the cell inner membrane. Functionally, part of the ABC transporter complex UgpBAEC involved in sn-glycerol-3-phosphate (G3P) import. Probably responsible for the translocation of the substrate across the membrane. The sequence is that of sn-glycerol-3-phosphate transport system permease protein UgpA (ugpA) from Yersinia pseudotuberculosis serotype I (strain IP32953).